The sequence spans 309 residues: D-alanine--D-alanine ligase (309 aa).

Positions 105 to 304 (KQIWHSVGLP…FNDLVERILA (200 aa)) constitute an ATP-grasp domain. ATP is bound at residue 135 to 190 (LQELGGRVIVKPAREGSSIGMSIADNGRSLALALQHAAEFDDDLLVEQWVEGAEYT). Residues Asp258, Glu271, and Asn273 each coordinate Mg(2+).

It belongs to the D-alanine--D-alanine ligase family. The cofactor is Mg(2+). Mn(2+) is required as a cofactor.

It localises to the cytoplasm. It carries out the reaction 2 D-alanine + ATP = D-alanyl-D-alanine + ADP + phosphate + H(+). It participates in cell wall biogenesis; peptidoglycan biosynthesis. Its function is as follows. Cell wall formation. The protein is D-alanine--D-alanine ligase of Idiomarina loihiensis (strain ATCC BAA-735 / DSM 15497 / L2-TR).